An 873-amino-acid polypeptide reads, in one-letter code: DNA mismatch repair protein MutS (873 aa).

628–635 serves as a coordination point for ATP; it reads GPNMAGKS.

This sequence belongs to the DNA mismatch repair MutS family.

Functionally, this protein is involved in the repair of mismatches in DNA. It is possible that it carries out the mismatch recognition step. This protein has a weak ATPase activity. In Chlorobium chlorochromatii (strain CaD3), this protein is DNA mismatch repair protein MutS.